The sequence spans 298 residues: Cytidine deaminase (298 aa).

2 consecutive CMP/dCMP-type deaminase domains span residues 47–167 and 186–298; these read TEQQ…FGPS and DSDD…PLLG. Residue 88–90 participates in substrate binding; the sequence is NLE. His-101 serves as a coordination point for Zn(2+). Glu-103 (proton donor) is an active-site residue. 2 residues coordinate Zn(2+): Cys-128 and Cys-131.

It belongs to the cytidine and deoxycytidylate deaminase family. Homodimer. Requires Zn(2+) as cofactor.

The catalysed reaction is cytidine + H2O + H(+) = uridine + NH4(+). It carries out the reaction 2'-deoxycytidine + H2O + H(+) = 2'-deoxyuridine + NH4(+). Its function is as follows. This enzyme scavenges exogenous and endogenous cytidine and 2'-deoxycytidine for UMP synthesis. The sequence is that of Cytidine deaminase from Shewanella frigidimarina (strain NCIMB 400).